Consider the following 2179-residue polypeptide: Genome polyprotein (2179 aa).

Disordered stretches follow at residues 503–531, 623–678, 703–738, and 753–847; these read FSKD…PTGD, QPQK…YPIQ, RAKK…GDQF, and EPSV…PPKM. 2 stretches are compositionally biased toward polar residues: residues 630 to 642 and 659 to 678; these read DTPS…QPFH and TTFA…YPIQ. Positions 758–770 are enriched in polar residues; that stretch reads SEDTSSQSYISTE. Residues 783 to 806 show a composition bias toward low complexity; the sequence is SEESTQLSQLSSSSNDSPENNENT. Over residues 819 to 831 the composition is skewed to acidic residues; sequence EISEVEDEVDGMT. A CCHC-type zinc finger spans residues 1112–1125; sequence CFTCGKIGHFSRNC. Residue Asp1226 is the For protease activity; shared with dimeric partner of the active site. The 183-residue stretch at 1409-1591 folds into the Reverse transcriptase domain; sequence QQFDLIEPSD…NKIQFLGMDF (183 aa). Residues Asp1479, Asp1542, and Asp1543 each coordinate Mg(2+). Disordered regions lie at residues 1822–1848, 2114–2144, and 2160–2179; these read QRRT…KLSH, NIVK…KNKC, and YSTK…EPCV. Low complexity predominate over residues 1827–1840; it reads SSSTKSKADSSQST. Basic residues predominate over residues 2120-2144; that stretch reads PRKRKGKAKSRSSTRSEKRRAKNKC. A compositionally biased stretch (polar residues) spans 2162-2179; sequence TKPSTPSWTQDSSSEPCV.

Belongs to the Petuviruses genome polyprotein family.

It catalyses the reaction DNA(n) + a 2'-deoxyribonucleoside 5'-triphosphate = DNA(n+1) + diphosphate. Functionally, encodes presumably for at least four polypeptides: Movement protein (MP), capsid protein (CP), Protease (PR), and reverse transcriptase (RT). The sequence is that of Genome polyprotein from Petunia vein clearing virus (isolate Shepherd) (PVCV).